The sequence spans 187 residues: Pre-mRNA-splicing factor cwf7 (187 aa).

Belongs to the SPF27 family. Belongs to the 40S cdc5-associated complex (or cwf complex), a spliceosome sub-complex reminiscent of a late-stage spliceosome composed of the U2, U5 and U6 snRNAs and at least brr2, cdc5, cwf2/prp3, cwf3/syf1, cwf4/syf3, cwf5/ecm2, spp42/cwf6, cwf7/spf27, cwf8, cwf9, cwf10, cwf11, cwf12, prp45/cwf13, cwf14, cwf15, cwf16, cwf17, cwf18, cwf19, cwf20, cwf21, cwf22, cwf23, cwf24, cwf25, cwf26, cyp7/cwf27, cwf28, cwf29/ist3, lea1, msl1, prp5/cwf1, prp10, prp12/sap130, prp17, prp22, sap61, sap62, sap114, sap145, slu7, smb1, smd1, smd3, smf1, smg1 and syf2.

The protein localises to the nucleus. In terms of biological role, involved in mRNA splicing. The sequence is that of Pre-mRNA-splicing factor cwf7 (cwf7) from Schizosaccharomyces pombe (strain 972 / ATCC 24843) (Fission yeast).